An 87-amino-acid polypeptide reads, in one-letter code: Small ribosomal subunit protein uS17 (87 aa).

The protein belongs to the universal ribosomal protein uS17 family. In terms of assembly, part of the 30S ribosomal subunit.

Its function is as follows. One of the primary rRNA binding proteins, it binds specifically to the 5'-end of 16S ribosomal RNA. The protein is Small ribosomal subunit protein uS17 of Lacticaseibacillus casei (strain BL23) (Lactobacillus casei).